A 616-amino-acid chain; its full sequence is Spastin (616 aa).

Residues 1 to 43 (MNSPGGRGKKKGSGGASNPVPPRPPPPCLAPAPPAAGPAPPPE) form a disordered region. A required for nuclear localization region spans residues 1 to 50 (MNSPGGRGKKKGSGGASNPVPPRPPPPCLAPAPPAAGPAPPPESPHKRNL). The Cytoplasmic portion of the chain corresponds to 1-56 (MNSPGGRGKKKGSGGASNPVPPRPPPPCLAPAPPAAGPAPPPESPHKRNLYYFSYP). Residues 1–80 (MNSPGGRGKK…LGLLFVWLCQ (80 aa)) form a required for interaction with ATL1 region. The tract at residues 1 to 194 (MNSPGGRGKK…LVMAKDRLQL (194 aa)) is required for midbody localization. A required for interaction with RTN1 region spans residues 1 to 300 (MNSPGGRGKK…GTPKTNRTNK (300 aa)). The Nuclear localization signal signature appears at 4 to 11 (PGGRGKKK). The span at 19–43 (PVPPRPPPPCLAPAPPAAGPAPPPE) shows a compositional bias: pro residues. The tract at residues 50–87 (LYYFSYPLFVGFALLRLVAFHLGLLFVWLCQRFSRALM) is required for interaction with SSNA1 and microtubules. An intramembrane region (helical) is located at residues 57 to 77 (LFVGFALLRLVAFHLGLLFVW). The short motif at 59–67 (VGFALLRLV) is the Nuclear export signal element. The Cytoplasmic portion of the chain corresponds to 78 to 616 (LCQRFSRALM…WNKDFGDTTV (539 aa)). Positions 112–196 (EAERVRVFHK…MAKDRLQLLE (85 aa)) are sufficient for interaction with CHMP1B. Residues 114-200 (ERVRVFHKQA…RLQLLEKMQP (87 aa)) form a required for interaction with microtubules region. Positions 120–195 (HKQAFEYISI…VMAKDRLQLL (76 aa)) constitute an MIT domain. Residues 224-266 (HLQSESGAVPKRKDPLTHTSNSLPRSKTVMKTGSAGLSGHHRA) form a disordered region. A sufficient for microtubule severing region spans residues 228-616 (ESGAVPKRKD…WNKDFGDTTV (389 aa)). Residues 240–254 (THTSNSLPRSKTVMK) show a composition bias toward polar residues. Serine 245 and serine 268 each carry phosphoserine. A required for interaction with microtubules and microtubule severing region spans residues 270–328 (SGLSMVSGVKQGSGPAPTTHKGTPKTNRTNKPSTPTTATRKKKDLKNFRNVDSNLANLI). The tract at residues 278 to 312 (VKQGSGPAPTTHKGTPKTNRTNKPSTPTTATRKKK) is disordered. Residues 289–307 (HKGTPKTNRTNKPSTPTTA) show a composition bias toward polar residues. Phosphothreonine is present on threonine 306. The Nuclear localization signal motif lies at 309-312 (RKKK). The interval 310 to 312 (KKK) is required for interaction with microtubules. ATP is bound at residue 382-389 (GPPGNGKT). Serine 597 carries the phosphoserine modification.

It belongs to the AAA ATPase family. Spastin subfamily. In terms of assembly, homohexamer. Mostly monomeric, but assembles into hexameric structure for short periods of time. Oligomerization seems to be a prerequisite for catalytic activity. Binding to ATP in a cleft between two adjacent subunits stabilizes the homohexameric form. Binds to microtubules at least in part via the alpha-tubulin and beta-tubulin tails. The hexamer adopts a ring conformation through which microtubules pass prior to being severed. Does not interact strongly with tubulin heterodimers. Interacts (via MIT domain) with CHMP1B; the interaction is direct. Interacts with SSNA1. Interacts with ATL1. Interacts with RTN1. Interacts with ZFYVE27. Isoform 1 but not isoform 3 interacts with RTN2. Interacts with REEP1. Interacts (via MIT domain) with IST1. As to expression, expressed in brain, heart, kidney, liver, lung, pancreas, placenta and skeletal muscle. The short isoforms may predominate in brain and spinal cord.

Its subcellular location is the membrane. It is found in the endoplasmic reticulum. The protein localises to the midbody. The protein resides in the cytoplasm. It localises to the cytoskeleton. Its subcellular location is the microtubule organizing center. It is found in the centrosome. The protein localises to the perinuclear region. The protein resides in the nucleus. It localises to the spindle. Its subcellular location is the cell projection. It is found in the axon. The protein localises to the endoplasmic reticulum membrane. The protein resides in the nucleus membrane. It localises to the lipid droplet. Its subcellular location is the endosome. The enzyme catalyses n ATP + n H2O + a microtubule = n ADP + n phosphate + (n+1) alpha/beta tubulin heterodimers.. With respect to regulation, allosteric enzyme with a cooperative mechanism; at least two neighbor subunits influence each other strongly in spastin hexamers. Microtubule binding promotes cooperative interactions among spastin subunits. ATP-bound enzyme interacts strongly and cooperatively with microtubules; this interaction stimulates ATP hydrolysis. ATP-dependent microtubule severing protein that specifically recognizes and cuts microtubules that are polyglutamylated. Preferentially recognizes and acts on microtubules decorated with short polyglutamate tails: severing activity increases as the number of glutamates per tubulin rises from one to eight, but decreases beyond this glutamylation threshold. Severing activity is not dependent on tubulin acetylation or detyrosination. Microtubule severing promotes reorganization of cellular microtubule arrays and the release of microtubules from the centrosome following nucleation. It is critical for the biogenesis and maintenance of complex microtubule arrays in axons, spindles and cilia. SPAST is involved in abscission step of cytokinesis and nuclear envelope reassembly during anaphase in cooperation with the ESCRT-III complex. Recruited at the midbody, probably by IST1, and participates in membrane fission during abscission together with the ESCRT-III complex. Recruited to the nuclear membrane by IST1 and mediates microtubule severing, promoting nuclear envelope sealing and mitotic spindle disassembly during late anaphase. Required for membrane traffic from the endoplasmic reticulum (ER) to the Golgi and endosome recycling. Recruited by IST1 to endosomes and regulates early endosomal tubulation and recycling by mediating microtubule severing. Probably plays a role in axon growth and the formation of axonal branches. Functionally, involved in lipid metabolism by regulating the size and distribution of lipid droplets. This is Spastin from Homo sapiens (Human).